The primary structure comprises 115 residues: NADH-ubiquinone oxidoreductase chain 3 (115 aa).

A run of 3 helical transmembrane segments spans residues 3–23 (FVLA…ITFW), 55–75 (FFLV…LLPL), and 84–104 (LPLM…GLTY).

The protein belongs to the complex I subunit 3 family. As to quaternary structure, core subunit of respiratory chain NADH dehydrogenase (Complex I) which is composed of 45 different subunits. Interacts with TMEM186. Interacts with TMEM242.

It is found in the mitochondrion inner membrane. It catalyses the reaction a ubiquinone + NADH + 5 H(+)(in) = a ubiquinol + NAD(+) + 4 H(+)(out). Core subunit of the mitochondrial membrane respiratory chain NADH dehydrogenase (Complex I) which catalyzes electron transfer from NADH through the respiratory chain, using ubiquinone as an electron acceptor. Essential for the catalytic activity of complex I. This chain is NADH-ubiquinone oxidoreductase chain 3, found in Pongo abelii (Sumatran orangutan).